A 34-amino-acid chain; its full sequence is Photosystem II reaction center protein Psb30 (34 aa).

Residues 9 to 29 form a helical membrane-spanning segment; that stretch reads QLIATGTIMLAGPAVIVLLAL.

It belongs to the Psb30/Ycf12 family. As to quaternary structure, PSII is composed of 1 copy each of membrane proteins PsbA, PsbB, PsbC, PsbD, PsbE, PsbF, PsbH, PsbI, PsbJ, PsbK, PsbL, PsbM, PsbT, PsbX, PsbY, PsbZ, Psb30/Ycf12, peripheral proteins of the oxygen-evolving complex and a large number of cofactors. It forms dimeric complexes.

It is found in the plastid. It localises to the chloroplast thylakoid membrane. Functionally, a core subunit of photosystem II (PSII), probably helps stabilize the reaction center. This Phaeodactylum tricornutum (strain CCAP 1055/1) protein is Photosystem II reaction center protein Psb30.